We begin with the raw amino-acid sequence, 292 residues long: Aquaporin-3 (292 aa).

The Cytoplasmic segment spans residues 1 to 24 (MGRQKELVSRCGEMLHIRYRLLRQ). The helical transmembrane segment at 25-42 (ALAECLGTLILVMFGCGS) threads the bilayer. Over 43 to 56 (VAQVVLSRGTHGGF) the chain is Extracellular. A helical membrane pass occupies residues 57–74 (LTINLAFGFAVTLGILIA). The Cytoplasmic portion of the chain corresponds to 75-78 (GQVS). The segment at residues 79 to 92 (GAHLNPAVTFAMCF) is an intramembrane region (discontinuously helical). The NPA 1 motif lies at 83–85 (NPA). At 93-100 (LAREPWIK) the chain is on the cytoplasmic side. A helical membrane pass occupies residues 101 to 121 (LPIYTLAQTLGAFLGAGIVFG). Topologically, residues 122-159 (LYYDAIWHFADNQLFVSGPNGTAGIFATYPSGHLDMIN) are extracellular. Asn141 is a glycosylation site (N-linked (GlcNAc...) asparagine). A helical transmembrane segment spans residues 160-177 (GFFDQFIGTASLIVCVLA). At 178–189 (IVDPYNNPVPRG) the chain is on the cytoplasmic side. Residues 190-206 (LEAFTVGLVVLVIGTSM) traverse the membrane as a helical segment. Topologically, residues 207 to 210 (GFNS) are extracellular. Residues 211-224 (GYAVNPARDFGPRL) constitute an intramembrane region (discontinuously helical). An NPA 2 motif is present at residues 215–217 (NPA). The Extracellular segment spans residues 225–242 (FTALAGWGSAVFTTGQHW). Residues 243–264 (WWVPIVSPLLGSIAGVFVYQLM) form a helical membrane-spanning segment. The Cytoplasmic portion of the chain corresponds to 265–292 (IGCHLEQPPPSNEEENVKLAHVKHKEQI).

This sequence belongs to the MIP/aquaporin (TC 1.A.8) family. Homotetramer; each monomer provides an independent glycerol/water pore. Could also exist in other oligomeric states. As to expression, widely expressed in epithelial cells of kidney (collecting ducts) and airways, in keratinocytes, immature dendritic cells and erythrocytes. Isoform 2 is not detectable in erythrocytes at the protein level.

The protein resides in the cell membrane. Its subcellular location is the basolateral cell membrane. The catalysed reaction is glycerol(in) = glycerol(out). The enzyme catalyses H2O(in) = H2O(out). It catalyses the reaction H2O2(out) = H2O2(in). It carries out the reaction urea(in) = urea(out). Its activity is regulated as follows. Glycerol transport is regulated by pH, with the porin being permeable to glycerol at pH 7.4 but not at pH 5.5. Water permeability, however, is not influenced by pH. In terms of biological role, aquaglyceroporins form homotetrameric transmembrane channels, with each monomer independently mediating glycerol and water transport across the plasma membrane along their osmotic gradient. Could also be permeable to urea. Also participates in cell permeability to H2O2 and H2O2-mediated signaling. In skin, transports glycerol to the epidermis and stratum corneum, where it maintains hydration, elasticity, and supports lipid biosynthesis for barrier repair. In kidney, contributes to the reabsorption of water, helping the body maintain proper fluid balance. The protein is Aquaporin-3 of Homo sapiens (Human).